A 341-amino-acid chain; its full sequence is tRNA N6-adenosine threonylcarbamoyltransferase (341 aa).

The Fe cation site is built by H117 and H121. Residues 139–143 (VVSGG), D172, G185, D189, and N278 each bind substrate. Residue D307 participates in Fe cation binding.

The protein belongs to the KAE1 / TsaD family. Fe(2+) is required as a cofactor.

The protein localises to the cytoplasm. The catalysed reaction is L-threonylcarbamoyladenylate + adenosine(37) in tRNA = N(6)-L-threonylcarbamoyladenosine(37) in tRNA + AMP + H(+). Its function is as follows. Required for the formation of a threonylcarbamoyl group on adenosine at position 37 (t(6)A37) in tRNAs that read codons beginning with adenine. Is involved in the transfer of the threonylcarbamoyl moiety of threonylcarbamoyl-AMP (TC-AMP) to the N6 group of A37, together with TsaE and TsaB. TsaD likely plays a direct catalytic role in this reaction. This is tRNA N6-adenosine threonylcarbamoyltransferase from Bacillus licheniformis (strain ATCC 14580 / DSM 13 / JCM 2505 / CCUG 7422 / NBRC 12200 / NCIMB 9375 / NCTC 10341 / NRRL NRS-1264 / Gibson 46).